A 485-amino-acid polypeptide reads, in one-letter code: UDP-N-acetylmuramate--L-alanine ligase (485 aa).

Residue 120-126 coordinates ATP; it reads GSHGKTT.

It belongs to the MurCDEF family.

The protein resides in the cytoplasm. The catalysed reaction is UDP-N-acetyl-alpha-D-muramate + L-alanine + ATP = UDP-N-acetyl-alpha-D-muramoyl-L-alanine + ADP + phosphate + H(+). It functions in the pathway cell wall biogenesis; peptidoglycan biosynthesis. Functionally, cell wall formation. This is UDP-N-acetylmuramate--L-alanine ligase from Rickettsia massiliae (strain Mtu5).